We begin with the raw amino-acid sequence, 1179 residues long: DNA-directed RNA polymerase subunit beta (1179 aa).

Belongs to the RNA polymerase beta chain family. In terms of assembly, the RNAP catalytic core consists of 2 alpha, 1 beta, 1 beta' and 1 omega subunit. When a sigma factor is associated with the core the holoenzyme is formed, which can initiate transcription.

It carries out the reaction RNA(n) + a ribonucleoside 5'-triphosphate = RNA(n+1) + diphosphate. DNA-dependent RNA polymerase catalyzes the transcription of DNA into RNA using the four ribonucleoside triphosphates as substrates. This Oceanobacillus iheyensis (strain DSM 14371 / CIP 107618 / JCM 11309 / KCTC 3954 / HTE831) protein is DNA-directed RNA polymerase subunit beta.